A 503-amino-acid polypeptide reads, in one-letter code: Envelope glycoprotein p57 (503 aa).

An N-terminal signal peptide occupies residues 1–22 (MQLSMSFLIGFGTLVLALSART). The Extracellular segment spans residues 23 to 467 (FDLQGLSCNT…FLNPLGWLRD (445 aa)). Residues N63, N109, N139, N192, N196, N202, N221, N230, and N235 are each glycosylated (N-linked (GlcNAc...) asparagine; by host). The fusion peptide stretch occupies residues 274–315 (ILQSLLLGVFGTGIASASQFLRGWLNHPDIIGYIVNGVGVVW). Residues N321, N328, N388, and N438 are each glycosylated (N-linked (GlcNAc...) asparagine; by host). The chain crosses the membrane as a helical span at residues 468–488 (LLAWAAWLGGVLYLISLCVSL). Over 489–503 (PASFARRRRLGRWQE) the chain is Cytoplasmic.

Post-translationally, glycosated; Stabilizes it. In terms of processing, a portion of p57 is cleaved into p27 and p29. p27 and p29 are called gp43 when glycosylated, as they seem to have the same molecular weight.

The protein resides in the host endoplasmic reticulum membrane. It is found in the virion. Its subcellular location is the host cell membrane. Unprocessed envelope protein p57 is thought to be involved in attachment of the virus to its cell surface receptor. This attachment induces virion internalization predominantly through clathrin-dependent endocytosis. Its function is as follows. Envelope protein p27 and p29 presumably linked by disulfide bond are the viral type II fusion protein, involved in pH-dependent fusion within early endosomes after internalization of the virion by endocytosis. The polypeptide is Envelope glycoprotein p57 (G) (Borna disease virus 1 (BoDV-1)).